Consider the following 412-residue polypeptide: Probable histone-binding protein rba-1 (412 aa).

6 WD repeats span residues 117 to 157, 169 to 209, 219 to 259, 262 to 302, 306 to 346, and 365 to 405; these read NHPG…SEPK, GHEG…TISG, GHSS…PQLT, GHTA…KKMY, HHND…DPSS, and GHTG…VSSE.

It belongs to the WD repeat RBAP46/RBAP48/MSI1 family. Binds directly to helix 1 of the histone fold of histone H4, a region that is not accessible when H4 is in chromatin. Interacts with zft-11; the interaction is required to suppress the activation of non-neuronal genes in neurons.

It localises to the nucleus. Its function is as follows. Core histone-binding subunit that may target chromatin assembly factors, chromatin remodeling factors and histone deacetylases to their histone substrates in a manner that is regulated by nucleosomal DNA. Plays a role in regulating cell cycle progression. Required to repress the induction of vulval development by Ras signaling. In association with the zinc finger protein ztf-11, negatively regulates the expression of non-neuronal genes during neurogenesis. The sequence is that of Probable histone-binding protein rba-1 from Caenorhabditis elegans.